Reading from the N-terminus, the 619-residue chain is 2-succinyl-5-enolpyruvyl-6-hydroxy-3-cyclohexene-1-carboxylate synthase (619 aa).

Residues 385 to 398 are compositionally biased toward polar residues; that stretch reads SSAHQSLAATNSDS. The tract at residues 385-415 is disordered; the sequence is SSAHQSLAATNSDSSTDDIIENTDEEGSNES. Residues 399-413 are compositionally biased toward acidic residues; sequence STDDIIENTDEEGSN.

It belongs to the TPP enzyme family. MenD subfamily. As to quaternary structure, homodimer. It depends on Mg(2+) as a cofactor. Mn(2+) serves as cofactor. Thiamine diphosphate is required as a cofactor.

The enzyme catalyses isochorismate + 2-oxoglutarate + H(+) = 5-enolpyruvoyl-6-hydroxy-2-succinyl-cyclohex-3-ene-1-carboxylate + CO2. It functions in the pathway quinol/quinone metabolism; 1,4-dihydroxy-2-naphthoate biosynthesis; 1,4-dihydroxy-2-naphthoate from chorismate: step 2/7. It participates in quinol/quinone metabolism; menaquinone biosynthesis. In terms of biological role, catalyzes the thiamine diphosphate-dependent decarboxylation of 2-oxoglutarate and the subsequent addition of the resulting succinic semialdehyde-thiamine pyrophosphate anion to isochorismate to yield 2-succinyl-5-enolpyruvyl-6-hydroxy-3-cyclohexene-1-carboxylate (SEPHCHC). This chain is 2-succinyl-5-enolpyruvyl-6-hydroxy-3-cyclohexene-1-carboxylate synthase, found in Haloquadratum walsbyi (strain DSM 16790 / HBSQ001).